The following is a 1051-amino-acid chain: DNA-directed RNA polymerase subunit beta (1051 aa).

Belongs to the RNA polymerase beta chain family. In terms of assembly, in plastids the minimal PEP RNA polymerase catalytic core is composed of four subunits: alpha, beta, beta', and beta''. When a (nuclear-encoded) sigma factor is associated with the core the holoenzyme is formed, which can initiate transcription (Potential).

It localises to the plastid. The protein resides in the apicoplast. It carries out the reaction RNA(n) + a ribonucleoside 5'-triphosphate = RNA(n+1) + diphosphate. Functionally, DNA-dependent RNA polymerase catalyzes the transcription of DNA into RNA using the four ribonucleoside triphosphates as substrates. The polypeptide is DNA-directed RNA polymerase subunit beta (rpoB) (Toxoplasma gondii).